A 123-amino-acid chain; its full sequence is U9-barytoxin-Tl1a (123 aa).

A signal peptide spans 1–18 (MNTMITFLVLFVLTAANG). Residues 19–77 (APEANERKIPEAIHNEDQSLAEMAEELMFFLQQTEFEAPLLQEEEEAEXAEXRNSRERR) constitute a propeptide that is removed on maturation. Disulfide bonds link C78–C93, C85–C98, and C92–C112.

It belongs to the neurotoxin 14 (magi-1) family. 05 (ICK-7) subfamily. ICK-7 sub-subfamily. As to expression, expressed by the venom gland.

It is found in the secreted. Ion channel inhibitor. In Trittame loki (Brush-footed trapdoor spider), this protein is U9-barytoxin-Tl1a.